A 61-amino-acid chain; its full sequence is MARTSLVVKASREPKFSARKYNRCPICGRPRAFIRKFGICRICFRSMASMGKLPGVTKSSW.

Cysteine 24, cysteine 27, cysteine 40, and cysteine 43 together coordinate Zn(2+).

The protein belongs to the universal ribosomal protein uS14 family. Zinc-binding uS14 subfamily. Part of the 30S ribosomal subunit. Contacts proteins S3 and S10. Zn(2+) serves as cofactor.

Functionally, binds 16S rRNA, required for the assembly of 30S particles and may also be responsible for determining the conformation of the 16S rRNA at the A site. This Desulfosudis oleivorans (strain DSM 6200 / JCM 39069 / Hxd3) (Desulfococcus oleovorans) protein is Small ribosomal subunit protein uS14.